The primary structure comprises 184 residues: MKSENNLIWIDLEMTGLDHKADQIIEIATVVTDAELNVLAEGPVMAIQTEQHYLDGMDAWCTTHHGNSGLTKRVQESTITMAQAEQETIKFLKPYVPKGKSPMCGNSICQDRRFLIEQMPELEQFFHYRNLDVSSLKELARRWAPTVYSGYKKKGAHLALDDIYESIEELKYYRQNLFLPEFQQ.

One can recognise an Exonuclease domain in the interval 7–170 (LIWIDLEMTG…DDIYESIEEL (164 aa)). Y128 is an active-site residue.

It belongs to the oligoribonuclease family.

The protein resides in the cytoplasm. In terms of biological role, 3'-to-5' exoribonuclease specific for small oligoribonucleotides. The sequence is that of Oligoribonuclease from Hydrogenovibrio crunogenus (strain DSM 25203 / XCL-2) (Thiomicrospira crunogena).